The sequence spans 691 residues: Protein phosphatase 1 regulatory subunit 37 (691 aa).

Residues 1–43 are disordered; the sequence is MEIAPQEAPPVPGADGDIEEAPAEAGSPSPASPPADGRLKAAA. A phosphoserine mark is found at Ser-50 and Ser-56. 5 LRR repeats span residues 220–240, 248–269, 277–297, 306–326, and 334–354; these read SLAV…MLLA, NLRE…AQLG, SLQI…AYIC, GLVT…AFLG, and SLET…RHLK. The disordered stretch occupies residues 460 to 662; sequence EREEKEQPPQ…PEVKGGSCGL (203 aa). Polar residues predominate over residues 468-481; sequence PQLSASMPETTATE. A compositionally biased stretch (acidic residues) spans 505–523; sequence SDSDSDSDGEEEEEEEGER. Residue Ser-561 is modified to Phosphoserine. Pro residues-rich tracts occupy residues 584-605 and 620-634; these read PASP…PSLP and PQPP…PPLP.

It belongs to the PPP1R37 family. In terms of assembly, interacts with PPP1CA.

Functionally, inhibits phosphatase activity of protein phosphatase 1 (PP1) complexes. The polypeptide is Protein phosphatase 1 regulatory subunit 37 (PPP1R37) (Homo sapiens (Human)).